The primary structure comprises 910 residues: Protein translocase subunit SecA (910 aa).

Residues Q86, 104–108, and D508 each bind ATP; that span reads GEGKT. Zn(2+)-binding residues include C894, C896, C905, and C906.

The protein belongs to the SecA family. Monomer and homodimer. Part of the essential Sec protein translocation apparatus which comprises SecA, SecYEG and auxiliary proteins SecDF. Other proteins may also be involved. Requires Zn(2+) as cofactor.

The protein resides in the cell membrane. The protein localises to the cytoplasm. The catalysed reaction is ATP + H2O + cellular proteinSide 1 = ADP + phosphate + cellular proteinSide 2.. In terms of biological role, part of the Sec protein translocase complex. Interacts with the SecYEG preprotein conducting channel. Has a central role in coupling the hydrolysis of ATP to the transfer of proteins into and across the cell membrane, serving as an ATP-driven molecular motor driving the stepwise translocation of polypeptide chains across the membrane. The chain is Protein translocase subunit SecA from Acetivibrio thermocellus (strain ATCC 27405 / DSM 1237 / JCM 9322 / NBRC 103400 / NCIMB 10682 / NRRL B-4536 / VPI 7372) (Clostridium thermocellum).